An 89-amino-acid polypeptide reads, in one-letter code: Cell division topological specificity factor (89 aa).

The protein belongs to the MinE family.

In terms of biological role, prevents the cell division inhibition by proteins MinC and MinD at internal division sites while permitting inhibition at polar sites. This ensures cell division at the proper site by restricting the formation of a division septum at the midpoint of the long axis of the cell. This is Cell division topological specificity factor from Janthinobacterium sp. (strain Marseille) (Minibacterium massiliensis).